Reading from the N-terminus, the 468-residue chain is Elongation factor 1-alpha (468 aa).

One can recognise a tr-type G domain in the interval 6–244 (KPHINIVVIG…DNIPLPARPS (239 aa)). The G1 stretch occupies residues 15–22 (GHVDSGKS). GTP is bound at residue 15-22 (GHVDSGKS). The segment at 71–75 (GITID) is G2. The segment at 92 to 95 (DAPG) is G3. GTP-binding positions include 92 to 96 (DAPGH) and 154 to 157 (NKID). A G4 region spans residues 154–157 (NKID). The tract at residues 195 to 197 (SGW) is G5. 2 positions are modified to 5-glutamyl glycerylphosphorylethanolamine: Glu-303 and Glu-376.

It belongs to the TRAFAC class translation factor GTPase superfamily. Classic translation factor GTPase family. EF-Tu/EF-1A subfamily.

It is found in the cytoplasm. This protein promotes the GTP-dependent binding of aminoacyl-tRNA to the A-site of ribosomes during protein biosynthesis. The chain is Elongation factor 1-alpha from Hydra vulgaris (Hydra).